We begin with the raw amino-acid sequence, 211 residues long: Thiamine-phosphate synthase (211 aa).

4-amino-2-methyl-5-(diphosphooxymethyl)pyrimidine is bound by residues 36–40 (QLREK) and Asn68. Positions 69 and 88 each coordinate Mg(2+). Ser107 is a 4-amino-2-methyl-5-(diphosphooxymethyl)pyrimidine binding site. Residue 133–135 (TGS) participates in 2-[(2R,5Z)-2-carboxy-4-methylthiazol-5(2H)-ylidene]ethyl phosphate binding. 4-amino-2-methyl-5-(diphosphooxymethyl)pyrimidine is bound at residue Lys136. 2-[(2R,5Z)-2-carboxy-4-methylthiazol-5(2H)-ylidene]ethyl phosphate is bound by residues Gly167 and 187–188 (IT).

The protein belongs to the thiamine-phosphate synthase family. Requires Mg(2+) as cofactor.

The enzyme catalyses 2-[(2R,5Z)-2-carboxy-4-methylthiazol-5(2H)-ylidene]ethyl phosphate + 4-amino-2-methyl-5-(diphosphooxymethyl)pyrimidine + 2 H(+) = thiamine phosphate + CO2 + diphosphate. The catalysed reaction is 2-(2-carboxy-4-methylthiazol-5-yl)ethyl phosphate + 4-amino-2-methyl-5-(diphosphooxymethyl)pyrimidine + 2 H(+) = thiamine phosphate + CO2 + diphosphate. It catalyses the reaction 4-methyl-5-(2-phosphooxyethyl)-thiazole + 4-amino-2-methyl-5-(diphosphooxymethyl)pyrimidine + H(+) = thiamine phosphate + diphosphate. It functions in the pathway cofactor biosynthesis; thiamine diphosphate biosynthesis; thiamine phosphate from 4-amino-2-methyl-5-diphosphomethylpyrimidine and 4-methyl-5-(2-phosphoethyl)-thiazole: step 1/1. In terms of biological role, condenses 4-methyl-5-(beta-hydroxyethyl)thiazole monophosphate (THZ-P) and 2-methyl-4-amino-5-hydroxymethyl pyrimidine pyrophosphate (HMP-PP) to form thiamine monophosphate (TMP). The polypeptide is Thiamine-phosphate synthase (Haloarcula marismortui (strain ATCC 43049 / DSM 3752 / JCM 8966 / VKM B-1809) (Halobacterium marismortui)).